The primary structure comprises 3411 residues: Genome polyprotein (3411 aa).

At 1–104 the chain is on the cytoplasmic side; the sequence is MSGRKAQGKT…LSSRKRRSHD (104 aa). Residues 102–121 constitute a propeptide, ER anchor for the capsid protein C, removed in mature form by serine protease NS3; that stretch reads SHDALAVQFLILGMLLMAGG. Residues 105-125 traverse the membrane as a helical segment; that stretch reads ALAVQFLILGMLLMAGGVTLV. Residues 126–244 are Extracellular-facing; it reads RKNRWLLLNV…GERQLQKIER (119 aa). Asn-134 and Asn-150 each carry an N-linked (GlcNAc...) asparagine; by host glycan. Residues 245 to 265 traverse the membrane as a helical segment; the sequence is WLVRNPFFAVTALTIAYLVGS. Residues 266 to 270 lie on the Cytoplasmic side of the membrane; it reads NMTQR. A helical membrane pass occupies residues 271–285; it reads VVIALLVLAVGPAYS. Residues 286–730 lie on the Extracellular side of the membrane; sequence AHCIGITDRD…TVFGSAFQGL (445 aa). 8 disulfides stabilise this stretch: Cys-288–Cys-315, Cys-345–Cys-401, Cys-345–Cys-406, Cys-359–Cys-390, Cys-377–Cys-401, Cys-377–Cys-406, Cys-467–Cys-568, and Cys-585–Cys-615. Positions 383-396 are fusion peptide; the sequence is DRGWGNGCGLFGKG. A helical membrane pass occupies residues 731 to 751; the sequence is FGGLSWITKVIMGAVLIWVGI. Over 752–757 the chain is Extracellular; that stretch reads NTRNMT. The helical transmembrane segment at 758-778 threads the bilayer; sequence MSMSMILVGVIMMFLSLGVGA. Topologically, residues 779-1132 are extracellular; it reads DQGCAINFGK…LVRSWVTAGE (354 aa). Disulfide bonds link Cys-782–Cys-793, Cys-833–Cys-921, Cys-957–Cys-1002, Cys-1058–Cys-1107, Cys-1069–Cys-1091, and Cys-1090–Cys-1094. 2 N-linked (GlcNAc...) asparagine; by host glycosylation sites follow: Asn-908 and Asn-986. Residues 1133-1153 traverse the membrane as a helical segment; that stretch reads IHAVPFGLVSMMIAMEVVLRK. Topologically, residues 1154-1201 are cytoplasmic; the sequence is RQGPKQMLVGGVVLLGAMLVGQVTLLDLLKLTVAVGLHFHEMNNGGDA. Residues 1202-1222 form a helical membrane-spanning segment; it reads MYMALIAAFSIRPGLLIGFGL. Residues 1223-1287 are Lumenal-facing; sequence RTLWSPRERL…ILPLMALLTP (65 aa). Residues 1288–1308 traverse the membrane as a helical segment; sequence VTMAEVRLAAMLFCTVVIIGV. Topologically, residues 1309–1355 are cytoplasmic; sequence LHQNSKDTSMQKTIPLVALTLTSYLGLTQPFLGLCAFLATRLFGRRS. The helical transmembrane segment at 1356–1376 threads the bilayer; the sequence is IPVNEALAAAGLVGVLAGLAF. Residues 1377–1378 are Lumenal-facing; sequence QE. Residues 1379–1399 traverse the membrane as a helical segment; sequence MENFLGPIAVGGILMMLVSVA. The Cytoplasmic portion of the chain corresponds to 1400-1456; that stretch reads GRVDGLELRKLGEVSWEEEAEISGSSARYDVALSEQGEFKLLSEEKVPWDQVVMTSL. An interacts with and activates NS3 protease region spans residues 1407 to 1446; sequence LRKLGEVSWEEEAEISGSSARYDVALSEQGEFKLLSEEKV. The helical intramembrane region spans 1457-1477; it reads ALVGAAIHPFALLLVLAGWLF. The Cytoplasmic portion of the chain corresponds to 1478–2157; sequence HVKGARRSGD…RNALSMMPEA (680 aa). A Peptidase S7 domain is found at 1485 to 1665; the sequence is SGDVLWDIPT…EVKEEGKEEL (181 aa). Catalysis depends on charge relay system; for serine protease NS3 activity residues His-1537, Asp-1561, and Ser-1622. In terms of domain architecture, Helicase ATP-binding spans 1669 to 1825; the sequence is PTMLKKGMTT…HSNGEIEDVQ (157 aa). Positions 1673-1676 are important for RNA-binding; the sequence is KKGM. 1682 to 1689 lines the ATP pocket; that stretch reads FHPGAGKT. Residues 1773–1776 carry the DEAH box motif; sequence DEAH. The region spanning 1820-1997 is the Helicase C-terminal domain; sequence EIEDVQTDIP…VRGGMVAPLY (178 aa). Lys-1877 bears the N6-acetyllysine; by host mark. The interval 1942–1961 is disordered; sequence AAQRRGRIGRNPNRDGDSYY. The helical transmembrane segment at 2158-2178 threads the bilayer; that stretch reads MTIAMLFILAGLLTSGMVIFF. Topologically, residues 2179-2186 are lumenal; it reads MSPKGISR. Positions 2187–2207 form an intramembrane region, helical; it reads MSMAMGTMAGCGYLMFLGGVK. The Lumenal portion of the chain corresponds to 2208 to 2209; that stretch reads PT. Residues 2210-2230 form a helical membrane-spanning segment; that stretch reads HISYIMLIFFVLMVVVIPEPG. The Cytoplasmic portion of the chain corresponds to 2231–2241; it reads QQRSIQDNQVA. A helical membrane pass occupies residues 2242-2262; sequence YLIIGILTLVSVVAANELGML. Residues 2263 to 2293 lie on the Lumenal side of the membrane; that stretch reads EKTKEDLFGKKDLIPSSASPWSWPDLDLKPG. The helical intramembrane region spans 2294-2314; that stretch reads AAWTVYVGIVTMLSPMLHHWI. At 2315 to 2360 the chain is on the lumenal side; it reads KVEYGNLSLSGIAQSASVLSFMDKGIPFMKMNISVIILLVSGWNSI. A helical transmembrane segment spans residues 2361–2380; the sequence is TVMPLLCGIGCAMLHWSLIL. Topologically, residues 2381-2421 are cytoplasmic; sequence PGIKAQQSKLAQRRVFHGVAKNPVVDGNPTVDIEEAPEMPA. Residues 2422–2442 form a helical membrane-spanning segment; the sequence is LYEKKLALYLLLALSLASVAM. The Lumenal portion of the chain corresponds to 2443 to 2445; that stretch reads CRT. Residues 2446–2466 traverse the membrane as a helical segment; that stretch reads PFSLAEGIVLASAALGPLIEG. The Cytoplasmic segment spans residues 2467–3411; it reads NTSLLWNGPM…DADLQPGELI (945 aa). One can recognise an mRNA cap 0-1 NS5-type MT domain in the interval 2507-2771; the sequence is GRANGKTLGE…DVILPIGTRS (265 aa). Ser-2562 contacts S-adenosyl-L-methionine. Ser-2562 is modified (phosphoserine). The active-site For 2'-O-MTase activity is Lys-2567. Positions 2592, 2593, 2610, 2611, 2637, and 2638 each coordinate S-adenosyl-L-methionine. Asp-2652 functions as the For 2'-O-MTase activity in the catalytic mechanism. Ile-2653 is an S-adenosyl-L-methionine binding site. Residues Lys-2688 and Glu-2724 each act as for 2'-O-MTase activity in the active site. Tyr-2726 is an S-adenosyl-L-methionine binding site. A Nuclear localization signal motif is present at residues 2878-2911; sequence RKIMKVVNRWLFRHLAREKNPRLCTKEEFIAKVR. Positions 2945, 2949, 2954, and 2957 each coordinate Zn(2+). Residues 3035 to 3187 enclose the RdRp catalytic domain; the sequence is GGFYADDTAG…RPIDDRFGLA (153 aa). 3 residues coordinate Zn(2+): His-3222, Cys-3238, and Cys-3357.

The protein in the N-terminal section; belongs to the class I-like SAM-binding methyltransferase superfamily. mRNA cap 0-1 NS5-type methyltransferase family. As to quaternary structure, homodimer. Interacts (via N-terminus) with host EXOC1 (via C-terminus); this interaction results in EXOC1 degradation through the proteasome degradation pathway. In terms of assembly, forms heterodimers with envelope protein E in the endoplasmic reticulum and Golgi. Homodimer; in the endoplasmic reticulum and Golgi. Interacts with protein prM. Interacts with non-structural protein 1. As to quaternary structure, homodimer; Homohexamer when secreted. Interacts with envelope protein E. In terms of assembly, interacts (via N-terminus) with serine protease NS3. Forms a heterodimer with serine protease NS3. May form homooligomers. As to quaternary structure, forms a heterodimer with NS2B. Interacts with non-structural protein 2A (via N-terminus). Interacts with NS4B. Interacts with unphosphorylated RNA-directed RNA polymerase NS5; this interaction stimulates RNA-directed RNA polymerase NS5 guanylyltransferase activity. NS3 interacts with host PDCD6IP; this interaction contributes to virion release. In terms of assembly, interacts with serine protease NS3. Homodimer. Interacts with host STAT2; this interaction prevents the establishment of cellular antiviral state. Interacts with serine protease NS3. Interacts with host TRIM23; this interaction leads to NS5 ubiquitination. Specific enzymatic cleavages in vivo yield mature proteins. The nascent capsid protein C contains a C-terminal hydrophobic domain that act as a signal sequence for translocation of prM into the lumen of the ER. Mature capsid protein C is cleaved at a site upstream of this hydrophobic domain by NS3. prM is cleaved in post-Golgi vesicles by a host furin, releasing the mature small envelope protein M, and peptide pr. Non-structural protein 2A-alpha, a C-terminally truncated form of non-structural protein 2A, results from partial cleavage by NS3. Specific enzymatic cleavages in vivo yield mature proteins peptide 2K acts as a signal sequence and is removed from the N-terminus of NS4B by the host signal peptidase in the ER lumen. Signal cleavage at the 2K-4B site requires a prior NS3 protease-mediated cleavage at the 4A-2K site. Post-translationally, cleaved in post-Golgi vesicles by a host furin, releasing the mature small envelope protein M, and peptide pr. This cleavage is incomplete as up to 30% of viral particles still carry uncleaved prM. In terms of processing, N-glycosylated. N-glycosylated. The excreted form is glycosylated and this is required for efficient secretion of the protein from infected cells. Post-translationally, polyubiquitinated; ubiquitination is probably mediated by host TRIM23 and is prerequisite for NS5-STAT2 interaction. NS5 is not ISGylated or sumoylated. In terms of processing, acetylated by host KAT5. Acetylation modulates NS3 RNA-binding and unwinding activities and plays an important positive role for viral replication. Phosphorylated on serines residues. This phosphorylation may trigger NS5 nuclear localization.

Its subcellular location is the virion. The protein localises to the host nucleus. It localises to the host cytoplasm. The protein resides in the host perinuclear region. It is found in the secreted. Its subcellular location is the virion membrane. The protein localises to the host endoplasmic reticulum membrane. It carries out the reaction Selective hydrolysis of -Xaa-Xaa-|-Yaa- bonds in which each of the Xaa can be either Arg or Lys and Yaa can be either Ser or Ala.. The enzyme catalyses RNA(n) + a ribonucleoside 5'-triphosphate = RNA(n+1) + diphosphate. The catalysed reaction is a ribonucleoside 5'-triphosphate + H2O = a ribonucleoside 5'-diphosphate + phosphate + H(+). It catalyses the reaction ATP + H2O = ADP + phosphate + H(+). It carries out the reaction a 5'-end (5'-triphosphoguanosine)-ribonucleoside in mRNA + S-adenosyl-L-methionine = a 5'-end (N(7)-methyl 5'-triphosphoguanosine)-ribonucleoside in mRNA + S-adenosyl-L-homocysteine. The enzyme catalyses a 5'-end (N(7)-methyl 5'-triphosphoguanosine)-ribonucleoside in mRNA + S-adenosyl-L-methionine = a 5'-end (N(7)-methyl 5'-triphosphoguanosine)-(2'-O-methyl-ribonucleoside) in mRNA + S-adenosyl-L-homocysteine + H(+). Functionally, plays a role in virus budding by binding to the cell membrane and gathering the viral RNA into a nucleocapsid that forms the core of a mature virus particle. During virus entry, may induce genome penetration into the host cytoplasm after hemifusion induced by the surface proteins. Can migrate to the cell nucleus where it modulates host functions. Inhibits RNA silencing by interfering with host Dicer. Its function is as follows. Prevents premature fusion activity of envelope proteins in trans-Golgi by binding to envelope protein E at pH6.0. After virion release in extracellular space, gets dissociated from E dimers. In terms of biological role, acts as a chaperone for envelope protein E during intracellular virion assembly by masking and inactivating envelope protein E fusion peptide. prM is the only viral peptide matured by host furin in the trans-Golgi network probably to avoid catastrophic activation of the viral fusion activity in acidic Golgi compartment prior to virion release. prM-E cleavage is inefficient, and many virions are only partially matured. These uncleaved prM would play a role in immune evasion. Functionally, may play a role in virus budding. Exerts cytotoxic effects by activating a mitochondrial apoptotic pathway through M ectodomain. May display a viroporin activity. Binds to host cell surface receptor and mediates fusion between viral and cellular membranes. Envelope protein is synthesized in the endoplasmic reticulum in the form of heterodimer with protein prM. They play a role in virion budding in the ER, and the newly formed immature particle is covered with 60 spikes composed of heterodimer between precursor prM and envelope protein E. The virion is transported to the Golgi apparatus where the low pH causes dissociation of PrM-E heterodimers and formation of E homodimers. prM-E cleavage is inefficient, and many virions are only partially matured. These uncleaved prM would play a role in immune evasion. Its function is as follows. Involved in immune evasion, pathogenesis and viral replication. Once cleaved off the polyprotein, is targeted to three destinations: the viral replication cycle, the plasma membrane and the extracellular compartment. Essential for viral replication. Required for formation of the replication complex and recruitment of other non-structural proteins to the ER-derived membrane structures. Excreted as a hexameric lipoparticle that plays a role against host immune response. Antagonizing the complement function. Binds to the host macrophages and dendritic cells. Inhibits signal transduction originating from Toll-like receptor 3 (TLR3). In terms of biological role, component of the viral RNA replication complex that functions in virion assembly and antagonizes the host immune response. Functionally, required cofactor for the serine protease function of NS3. May have membrane-destabilizing activity and form viroporins. Displays three enzymatic activities: serine protease, NTPase and RNA helicase. NS3 serine protease, in association with NS2B, performs its autocleavage and cleaves the polyprotein at dibasic sites in the cytoplasm: C-prM, NS2A-NS2B, NS2B-NS3, NS3-NS4A, NS4A-2K and NS4B-NS5. NS3 RNA helicase binds RNA and unwinds dsRNA in the 3' to 5' direction. Also plays a role in virus assembly. Its function is as follows. Regulates the ATPase activity of the NS3 helicase activity. NS4A allows NS3 helicase to conserve energy during unwinding. In terms of biological role, functions as a signal peptide for NS4B and is required for the interferon antagonism activity of the latter. Functionally, induces the formation of ER-derived membrane vesicles where the viral replication takes place. Inhibits interferon (IFN)-induced host STAT1 phosphorylation and nuclear translocation, thereby preventing the establishment of cellular antiviral state by blocking the IFN-alpha/beta pathway. Replicates the viral (+) and (-) RNA genome, and performs the capping of genomes in the cytoplasm. NS5 methylates viral RNA cap at guanine N-7 and ribose 2'-O positions. Besides its role in RNA genome replication, also prevents the establishment of cellular antiviral state by blocking the interferon-alpha/beta (IFN-alpha/beta) signaling pathway. IFN-I induces binding of NS5 to host IFN-activated transcription factor STAT2, preventing its transcriptional activity. Host TRIM23 is the E3 ligase that interacts with and polyubiquitinates NS5 to promote its binding to STAT2 and trigger IFN-I signaling inhibition. The polypeptide is Genome polyprotein (Yellow fever virus (isolate Ivory Coast/1999) (YFV)).